The following is a 143-amino-acid chain: MFLGTHSPRLDEKGRMFLPAKYRDELAGGLVVTKGQERCLYVFPIREFERITQVLRAAPVTAKAVRDYSRVFFASASNELPDRQGRVTIPANLRAYAGLNRDCVVIGANTRLEIWDAQTWADYEAEQEQVFAELAEEVLPGVL.

2 consecutive SpoVT-AbrB domains span residues 5 to 47 (THSP…PIRE) and 76 to 119 (ASNE…DAQT).

Belongs to the MraZ family. As to quaternary structure, forms oligomers.

The protein resides in the cytoplasm. It localises to the nucleoid. The polypeptide is Transcriptional regulator MraZ (Thermobifida fusca (strain YX)).